The primary structure comprises 93 residues: GWPAYPGPNGIRSSVCQTKLGCGKKNLATKGVCKAFCLGRKRFWQKCGKNGSSGKGSRICNPVLAHAVEKAGKGLIKVTDMAVAAIVKYAGKK.

Intrachain disulfides connect Cys-16–Cys-37, Cys-22–Cys-33, and Cys-47–Cys-60.

This sequence belongs to the worm cytolysin family. In terms of tissue distribution, localized within the skin and proboscis and are most readily isolated from body mucus secretions.

It is found in the secreted. Its function is as follows. Cytolysin that shows hemolytic activity (on bovine erythrocytes, HC(50)=5.75 mg/ml). This hemolytic activity is completely inhibited by small unilamelar vesicles composed of PC/PG, PC/PI and PC/PS in 1:1 molar ratios (with at least 100 mg/ml concentration). This Parborlasia corrugatus (Antarctic nemertean worm) protein is Parbolysin P4.